A 218-amino-acid polypeptide reads, in one-letter code: Cytochrome P450 3A19 (218 aa).

Cysteine 153 contributes to the heme binding site.

The protein belongs to the cytochrome P450 family. The cofactor is heme.

The protein localises to the endoplasmic reticulum membrane. Its subcellular location is the microsome membrane. The enzyme catalyses an organic molecule + reduced [NADPH--hemoprotein reductase] + O2 = an alcohol + oxidized [NADPH--hemoprotein reductase] + H2O + H(+). Functionally, cytochromes P450 are a group of heme-thiolate monooxygenases. In liver microsomes, this enzyme is involved in an NADPH-dependent electron transport pathway. It oxidizes a variety of structurally unrelated compounds, including steroids, fatty acids, and xenobiotics. In Capra hircus aegagrus (Wild goat), this protein is Cytochrome P450 3A19 (CYP3A19).